We begin with the raw amino-acid sequence, 565 residues long: Berberine bridge enzyme-like C-2 (565 aa).

The N-terminal stretch at 1 to 17 (MFPIIILISFSFTFLFA) is a signal peptide. Residues Asn-28 and Asn-40 are each glycosylated (N-linked (GlcNAc...) asparagine). Cysteines 32 and 94 form a disulfide. An FAD-binding PCMH-type domain is found at 72-248 (YMPKPTVIIL…YAWKIRLLKV (177 aa)). His-109 carries the post-translational modification Pros-8alpha-FAD histidine. N-linked (GlcNAc...) asparagine glycosylation is found at Asn-363 and Asn-502.

This sequence belongs to the oxygen-dependent FAD-linked oxidoreductase family. The cofactor is FAD.

Its subcellular location is the vacuole. It participates in alkaloid biosynthesis; nicotine biosynthesis. Its function is as follows. Involved in the biosynthesis of pyridine alkaloid natural products, leading mainly to the production of anabasine, anatabine, nicotine and nornicotine, effective deterrents against herbivores with antiparasitic and pesticide properties (neurotoxins); nornicotine serves as the precursor in the synthesis of the carcinogen compound N'-nitrosonornicotine (NNN). Catalyzes a late oxidation step subsequent to the pyridine ring condensation reaction in the biosynthesis of alkaloids. This Nicotiana tabacum (Common tobacco) protein is Berberine bridge enzyme-like C-2.